Here is a 107-residue protein sequence, read N- to C-terminus: Monogrin 2 (107 aa).

Residues 1 to 20 (MEGKVLLCFALLLPFTVAQA) form the signal peptide. Cystine bridges form between Cys-28/Cys-82, Cys-36/Cys-62, and Cys-55/Cys-78. A BPTI/Kunitz inhibitor domain is found at 29–82 (GYLMMQRCRGDTTETKAWGFNYEEKKCQKETVICGTGGAPRNAFETKKDCDALC). Residues 37-39 (RGD) carry the Cell attachment site motif.

Post-translationally, the N-terminus is blocked. Expressed in salivary glands.

Its subcellular location is the cytoplasmic vesicle. The protein localises to the secretory vesicle. It is found in the secreted. Functionally, tick salivary platelet aggregation inhibitor that plays an important part in the anti-hemostatic strategy of ticks. Inhibits platelet aggregation induced by ADP (IC(50)~150 nM), collagen, and platelet activating factor (PAF). Acts by binding to platelet membrane glycoprotein IIb-IIIa (ITGA2B/ITGB3) in a metal ion dependent manner. Does not inhibit aggregation induced by ristocecin, an agonist that aggregates platelets independently from the glycoprotein IIb-IIIa (ITGA2B/ITGB3). In contrast to other tick platelet aggregation inhibitors, this protein does not protect ITGA2B/ITGB3 from dissociation under SDS condition, suggesting it may dissocate much faster than its orthologs. The chain is Monogrin 2 from Argas monolakensis (Mono lake bird tick).